Reading from the N-terminus, the 504-residue chain is Cytochrome P450 3A41 (504 aa).

Residue Cys-443 coordinates heme.

The protein belongs to the cytochrome P450 family. Heme serves as cofactor. Expressed in liver. Also expressed in the kidneys of female mice, with traces in the stomach, ovary, and heart of female mice and in the testis of male mice.

It is found in the endoplasmic reticulum membrane. Its subcellular location is the microsome membrane. The enzyme catalyses an organic molecule + reduced [NADPH--hemoprotein reductase] + O2 = an alcohol + oxidized [NADPH--hemoprotein reductase] + H2O + H(+). This chain is Cytochrome P450 3A41 (Cyp3a41a), found in Mus musculus (Mouse).